The primary structure comprises 163 residues: Nucleotide-binding protein Noca_0564 (163 aa).

The protein belongs to the YajQ family.

Its function is as follows. Nucleotide-binding protein. This Nocardioides sp. (strain ATCC BAA-499 / JS614) protein is Nucleotide-binding protein Noca_0564.